The chain runs to 402 residues: Beta-peptidyl aminopeptidase BapA (402 aa).

The signal sequence occupies residues 1-29 (MTSTQRLWSGALPLLTALIVSIAATASLA). The active-site Nucleophile is the Ser279. Catalysis depends on proton donor/acceptor residues Ser317 and Glu319.

The protein belongs to the peptidase S58 family. As to quaternary structure, heterooctamer of 4 heterodimers ((alpha:beta)4); each heterodimer is composed of an alpha subunit and a beta subunit processed from the same precursor. In terms of processing, autoproteolytic processing to generate the alpha and beta subunit is required for self-activation and is proposed to use a similar mechanism as substrate cleavage.

It is found in the periplasm. It catalyses the reaction Cleaves N-terminal beta-homoamino acids from peptides composed of 2 to 6 amino acids.. Inhibited by AEBSF (4-(2-aminoethyl)benzenesulfonyl fluoride, Pefabloc SC), ampicillin and AMP(hyd) (ampillicin-derived penicilloic acid). In terms of biological role, beta-aminopeptidase that can cleave synthetic beta-peptides which consist of backbone-elongated beta-amino acid residues that are not processed by common proteolytic enzymes. Can cleave the beta-peptides beta-homoVal-beta-homoAla-beta-homoLeu and beta-homoAla-beta-homoLeu. Requires a beta-amino acid at the N-terminus of peptide substrates and cleaves the peptide bond between the N-terminal beta-amino acid and the amino acid at the second position of tripeptidic substrates of the general structure H-betahXaa-Ile-betahTyr-OH according to the following preferences with regard to the side chain of the N-terminal beta-amino acid: aliphatic and aromatic &gt; OH-containing &gt; hydrogen, basic and polar. In Sphingosinicella xenopeptidilytica, this protein is Beta-peptidyl aminopeptidase BapA.